An 82-amino-acid polypeptide reads, in one-letter code: Immediate early response 3-interacting protein 1 (82 aa).

2 helical membrane passes run 2 to 22 (AFTLYTLLQAALLCVNAVAVL) and 62 to 82 (VMRVPLIIVNSVTIVLLLLFG).

This sequence belongs to the YOS1 family.

It localises to the endoplasmic reticulum membrane. In terms of biological role, regulator of endoplasmic reticulum secretion that acts as a key determinant of brain size. Required for secretion of extracellular matrix proteins. Required for correct brain development by depositing sufficient extracellular matrix proteins for tissue integrity and the proliferation of neural progenitors. Acts as a regulator of the unfolded protein response (UPR). In Xenopus laevis (African clawed frog), this protein is Immediate early response 3-interacting protein 1.